A 136-amino-acid polypeptide reads, in one-letter code: Polyadenylate-binding protein-interacting protein 2B (136 aa).

Residues 15-25 (NGSSVASTSPS) show a composition bias toward polar residues. 2 disordered regions span residues 15–40 (NGSS…HEEK) and 107–136 (SVGD…GVKY). The segment covering 27-40 (KCKEDQGLNGHEEK) has biased composition (basic and acidic residues).

This sequence belongs to the PAIP2 family. As to quaternary structure, interacts (via central acidic portion and C-terminus) with PABPC1 (via the second and third RRM domains and the C-terminus). In terms of processing, ubiquitinated in vitro. In terms of tissue distribution, expressed at very high levels in pancreas, at high levels in testis and at moderately high levels in brain, heart and lung (at protein level).

Its function is as follows. Inhibits translation of capped and polyadenylated mRNAs by displacing PABPC1 from the poly(A) tail. This is Polyadenylate-binding protein-interacting protein 2B (Paip2b) from Mus musculus (Mouse).